A 327-amino-acid chain; its full sequence is MTEAEDFAQLLQKLQNASPALPEGTSSTPTPSSSTGLLPNGKKTKGRVKIKMEYINNKLRRYTTFSKRKTGIMKKAFELSTLTGTQVMLLVASETGHVYTYATPKLQPMISSDTGKAMIQSCLNAPGGDGSDVQPSRTEFTFDSGNGGNGMRKRKMLSDVMSAESSNNSPSMPNFTPFLAPSMAPLFSTFGEDDYNNDESGDDSDSEEASSDIKEEYQGSPTMVKQETTEIDSVTASLQQRIKEAMRQAASNKQAIKKAKITPPSSNMNNAAFLNPFLLQGGANASNLLATAARKGDDAGSLTSNPFLSMGLNLQQLIESAAIASNE.

The segment at 12-43 (QKLQNASPALPEGTSSTPTPSSSTGLLPNGKK) is disordered. Over residues 25-35 (TSSTPTPSSST) the composition is skewed to low complexity. The MADS-box domain occupies 45 to 105 (KGRVKIKMEY…GHVYTYATPK (61 aa)). The disordered stretch occupies residues 189–225 (TFGEDDYNNDESGDDSDSEEASSDIKEEYQGSPTMVK). Over residues 191-210 (GEDDYNNDESGDDSDSEEAS) the composition is skewed to acidic residues.

In terms of tissue distribution, expressed in muscle, varying with age, decreasing twofold during the first week of adulthood.

It is found in the nucleus. Its function is as follows. Transcription factor. Regulates myogenesis, in cooperation with transcription factors hlh-1 and hnd-1. Required for maintenance of muscle in adulthood. The protein is Serum response factor homolog of Caenorhabditis elegans.